Reading from the N-terminus, the 231-residue chain is Protein fmp52-2, mitochondrial (231 aa).

Residues 1–46 constitute a mitochondrion transit peptide; sequence MTMTTAAVFGCTGAVGSQILATLLAIDTFPSVKTISRRLPNVQSPK.

The protein belongs to the FMP52 family.

The protein localises to the mitochondrion outer membrane. The protein is Protein fmp52-2, mitochondrial (fmp522) of Neosartorya fischeri (strain ATCC 1020 / DSM 3700 / CBS 544.65 / FGSC A1164 / JCM 1740 / NRRL 181 / WB 181) (Aspergillus fischerianus).